Here is a 532-residue protein sequence, read N- to C-terminus: NADH-quinone oxidoreductase subunit N 2 (532 aa).

Transmembrane regions (helical) follow at residues 37 to 57 (VAPPTLTALAALAVLVADLFL), 63 to 83 (RLLGYAALTALAAALALLIPL), 107 to 127 (FTLVIQALVLGGALLTVLLSL), 133 to 153 (LPAGEYWFLLLASAAGAALLP), 158 to 178 (LATLVVALEVASLPAFALVGI), 192 to 212 (FFLSSVVATAVMLLGVSFVYA), 241 to 261 (VALTLVGFAFKTAAAPFHFWV), 276 to 296 (LSVVGKAVGFSGLILVTVVAF), 302 to 322 (VWGPALAVLAALTMTAGNVAA), 336 to 356 (LLAWSSVAQAGYLLVPIAAAA), 367 to 387 (VAYALMYAVVNLGAFAVAAVV), 411 to 431 (LALGFFLLCLAGLPPGIIGLF), 444 to 464 (GLGWLAVVMAVNVVIALYYYL), and 504 to 524 (TAIVLTATAGILLSGVPQTVL).

Belongs to the complex I subunit 2 family. As to quaternary structure, NDH-1 is composed of 14 different subunits. Subunits NuoA, H, J, K, L, M, N constitute the membrane sector of the complex.

It localises to the cell membrane. The catalysed reaction is a quinone + NADH + 5 H(+)(in) = a quinol + NAD(+) + 4 H(+)(out). In terms of biological role, NDH-1 shuttles electrons from NADH, via FMN and iron-sulfur (Fe-S) centers, to quinones in the respiratory chain. The immediate electron acceptor for the enzyme in this species is believed to be a menaquinone. Couples the redox reaction to proton translocation (for every two electrons transferred, four hydrogen ions are translocated across the cytoplasmic membrane), and thus conserves the redox energy in a proton gradient. In Streptomyces griseus subsp. griseus (strain JCM 4626 / CBS 651.72 / NBRC 13350 / KCC S-0626 / ISP 5235), this protein is NADH-quinone oxidoreductase subunit N 2.